The sequence spans 317 residues: Ribonuclease Z (317 aa).

7 residues coordinate Zn(2+): His-63, His-65, Asp-67, His-68, His-143, Asp-213, and His-273. Asp-67 (proton acceptor) is an active-site residue.

This sequence belongs to the RNase Z family. In terms of assembly, homodimer. Zn(2+) is required as a cofactor.

The enzyme catalyses Endonucleolytic cleavage of RNA, removing extra 3' nucleotides from tRNA precursor, generating 3' termini of tRNAs. A 3'-hydroxy group is left at the tRNA terminus and a 5'-phosphoryl group is left at the trailer molecule.. Functionally, zinc phosphodiesterase, which displays some tRNA 3'-processing endonuclease activity. Probably involved in tRNA maturation, by removing a 3'-trailer from precursor tRNA. The polypeptide is Ribonuclease Z (Methanocaldococcus jannaschii (strain ATCC 43067 / DSM 2661 / JAL-1 / JCM 10045 / NBRC 100440) (Methanococcus jannaschii)).